We begin with the raw amino-acid sequence, 360 residues long: Peptide chain release factor 1 (360 aa).

Glutamine 235 bears the N5-methylglutamine mark.

The protein belongs to the prokaryotic/mitochondrial release factor family. In terms of processing, methylated by PrmC. Methylation increases the termination efficiency of RF1.

The protein resides in the cytoplasm. Peptide chain release factor 1 directs the termination of translation in response to the peptide chain termination codons UAG and UAA. The polypeptide is Peptide chain release factor 1 (Burkholderia multivorans (strain ATCC 17616 / 249)).